A 533-amino-acid polypeptide reads, in one-letter code: Aspartic proteinase sxa1 (533 aa).

The signal sequence occupies residues 1 to 23 (MKASFFVFAISALQALQASVASA). Residues 76–434 (YFANLTLGSN…DWDAQKIGLA (359 aa)) enclose the Peptidase A1 domain. N-linked (GlcNAc...) asparagine glycosylation occurs at asparagine 79. Aspartate 94 is an active-site residue. N-linked (GlcNAc...) asparagine glycans are attached at residues asparagine 106, asparagine 138, asparagine 153, asparagine 166, asparagine 271, asparagine 278, asparagine 299, and asparagine 319. Aspartate 325 is a catalytic residue. Residue asparagine 439 is glycosylated (N-linked (GlcNAc...) asparagine).

It belongs to the peptidase A1 family.

Functionally, involved in degradation or processing of the mating pheromones. Its loss may cause a persistent response to the pheromones. It may cleave the mating pheromone M-factor. May be involved in processing of zymogens that are required for zygote formation. The sequence is that of Aspartic proteinase sxa1 (sxa1) from Schizosaccharomyces pombe (strain 972 / ATCC 24843) (Fission yeast).